We begin with the raw amino-acid sequence, 374 residues long: tRNA-specific 2-thiouridylase MnmA (374 aa).

Residues 16–23 (GMSGGVDS) and methionine 42 each bind ATP. Positions 102 to 104 (NPD) are interaction with target base in tRNA. Residue cysteine 107 is the Nucleophile of the active site. The cysteines at positions 107 and 203 are disulfide-linked. ATP is bound at residue glycine 131. Positions 153–155 (KDQ) are interaction with tRNA. Cysteine 203 serves as the catalytic Cysteine persulfide intermediate. The interaction with tRNA stretch occupies residues 311 to 312 (RY).

The protein belongs to the MnmA/TRMU family.

It localises to the cytoplasm. It carries out the reaction S-sulfanyl-L-cysteinyl-[protein] + uridine(34) in tRNA + AH2 + ATP = 2-thiouridine(34) in tRNA + L-cysteinyl-[protein] + A + AMP + diphosphate + H(+). In terms of biological role, catalyzes the 2-thiolation of uridine at the wobble position (U34) of tRNA, leading to the formation of s(2)U34. The polypeptide is tRNA-specific 2-thiouridylase MnmA (Exiguobacterium sibiricum (strain DSM 17290 / CCUG 55495 / CIP 109462 / JCM 13490 / 255-15)).